A 601-amino-acid chain; its full sequence is MHRSDAAPASSIRIYFRLLSYVRPYVGLFAVSILGYVIFASSQPMLAGVLKYFVDGLTHPDAALVTGVPLLDGMELMHGVPLMIVLIAAWQGLGGYLGNYFLARVSLGLVHDLRQTLFDSLLRLPNTYFDQHSSGHLISRITFNVTMVTGAATDAIKIVIREGLTVVFLFAYLLWMNWRLTLVMVAILPLISLMVRNASGKFRKQSRKIQVAMGDVTHVASETIQGYRVVRSFGGEHYERERFRAASEDNTRKQLKMVKTSAVYTPTLQLVTYSAMAVVLFLVLRLRGEASVGDLVAYITAAGLLPKPIRQLSEVSSTIQRGVAGAESIFEQLDDKPEVDHGRIERERVSGRIEVRDLSFRYPGSDREVLDSVSFTVEPGQMIALVGRSGSGKSTLANLIPRFYHHDRGQILIDGVDVEDYTLKNLRRHIALVTQQVTLFNDTVANNIAYGDLAGLPRAAVEAAAEAGYAKEFIDRLPQGFDTLIGENGVTLSGGQRQRLAIARALLKNAPILILDEATSALDTESERHIQAALHRVMQARTTLVIAHRLSTIEQADVIMVMDHGRIVERGSHAELLAAGGHYARLHAMQFREEPAVAEGR.

4 helical membrane-spanning segments follow: residues 26–46 (VGLF…QPML), 82–102 (LMIV…NYFL), 167–187 (VFLF…MVAI), and 263–283 (VYTP…LFLV). Residues 30–321 (AVSILGYVIF…LSEVSSTIQR (292 aa)) form the ABC transmembrane type-1 domain. An ABC transporter domain is found at 353–589 (IEVRDLSFRY…GGHYARLHAM (237 aa)). Residue 387-394 (GRSGSGKS) coordinates ATP.

The protein belongs to the ABC transporter superfamily. Lipid exporter (TC 3.A.1.106) family. As to quaternary structure, homodimer.

The protein resides in the cell inner membrane. The catalysed reaction is ATP + H2O + lipid A-core oligosaccharideSide 1 = ADP + phosphate + lipid A-core oligosaccharideSide 2.. Involved in lipopolysaccharide (LPS) biosynthesis. Translocates lipid A-core from the inner to the outer leaflet of the inner membrane. Transmembrane domains (TMD) form a pore in the inner membrane and the ATP-binding domain (NBD) is responsible for energy generation. The chain is ATP-dependent lipid A-core flippase from Aromatoleum aromaticum (strain DSM 19018 / LMG 30748 / EbN1) (Azoarcus sp. (strain EbN1)).